The primary structure comprises 1253 residues: Structural polyprotein (1253 aa).

The interval valine 43 to alanine 77 is host transcription inhibition. Residues leucine 58–glutamate 110 form a disordered region. The segment covering alanine 66 to alanine 79 has biased composition (basic residues). Positions proline 70–proline 106 match the Nuclear localization signal motif. Basic and acidic residues predominate over residues lysine 80–lysine 92. The binding to the viral RNA stretch occupies residues asparagine 90–isoleucine 121. Over residues proline 93 to lysine 108 the composition is skewed to basic residues. The tract at residues proline 106 to cysteine 120 is ribosome-binding. A disulfide bridge links cysteine 120 with cysteine 135. The Peptidase S3 domain maps to cysteine 120 to tryptophan 268. Catalysis depends on histidine 146, which acts as the Charge relay system. Residues isoleucine 151 to tyrosine 161 carry the Nuclear export signal motif. Positions lysine 162–tyrosine 167 are interaction with spike glycoprotein E2. Aspartate 168 functions as the Charge relay system in the catalytic mechanism. A dimerization of the capsid protein region spans residues proline 190–alanine 200. Serine 220 functions as the Charge relay system in the catalytic mechanism. Positions aspartate 226 to arginine 230 are dimerization of the capsid protein. Residues serine 269 to valine 280 form a functions as an uncleaved signal peptide for the precursor of protein E3/E2 region. Disulfide bonds link cysteine 275-cysteine 284, cysteine 289-cysteine 293, and cysteine 292-cysteine 324. N-linked (GlcNAc...) asparagine; by host glycosylation occurs at asparagine 279. Residue asparagine 325 is glycosylated (N-linked (GlcNAc...) asparagine; by host). At serine 333–tyrosine 694 the chain is on the extracellular side. Intrachain disulfides connect cysteine 351–cysteine 457, cysteine 354–cysteine 360, cysteine 423–cysteine 437, cysteine 485–cysteine 597, cysteine 533–cysteine 557, and cysteine 535–cysteine 552. 2 interaction with host Mxra8 receptor regions span residues glutamine 358 to tyrosine 361 and histidine 394 to histidine 396. Residues glutamine 516–asparagine 519 are interaction with host Mxra8 receptor. The N-linked (GlcNAc...) asparagine; by host glycan is linked to asparagine 532. Residues threonine 548–isoleucine 554 are interaction with host Mxra8 receptor. A glycan (N-linked (GlcNAc...) asparagine; by host) is linked at asparagine 594. A helical membrane pass occupies residues proline 695 to alanine 715. At serine 716 to alanine 754 the chain is on the cytoplasmic side. Cysteine 717 carries S-stearoyl cysteine; by host lipidation. The interaction with the capsid protein stretch occupies residues threonine 722–lysine 726. A lipid anchor (S-stearoyl cysteine; by host) is attached at cysteine 727. A transient transmembrane before p62-6K protein processing region spans residues cysteine 727–cysteine 747. Cysteine 727 and cysteine 748 are oxidised to a cystine. S-palmitoyl cysteine; by host attachment occurs at residues cysteine 747 and cysteine 748. Topologically, residues alanine 755–glutamine 769 are extracellular. An N-linked (GlcNAc...) asparagine; by host glycan is attached at asparagine 768. The chain crosses the membrane as a helical span at residues threonine 770–leucine 790. Topologically, residues lysine 791 to asparagine 792 are cytoplasmic. Residues leucine 793 to valine 813 traverse the membrane as a helical segment. Extracellular loops occupy residues lysine 814–serine 815 and valine 826–arginine 1227. Intrachain disulfides connect cysteine 864-cysteine 929, cysteine 877-cysteine 909, cysteine 878-cysteine 911, and cysteine 883-cysteine 893. Positions valine 899–threonine 916 are E1 fusion peptide loop. Residues asparagine 956 and asparagine 1085 are each glycosylated (N-linked (GlcNAc...) asparagine; by host). Cystine bridges form between cysteine 1074-cysteine 1086, cysteine 1116-cysteine 1191, cysteine 1121-cysteine 1195, and cysteine 1143-cysteine 1185. The chain crosses the membrane as a helical span at residues valine 1228 to cysteine 1248. Cysteine 1248 carries S-palmitoyl cysteine; by host lipidation. The Cytoplasmic segment spans residues valine 1249 to arginine 1253.

In terms of assembly, homodimer. Homomultimer. Interacts with host karyopherin KPNA4; this interaction allows the nuclear import of the viral capsid protein. Interacts with spike glycoprotein E2. Interacts with host IRAK1; the interaction leads to inhibition of IRAK1-dependent signaling. As to quaternary structure, the precursor of protein E3/E2 and E1 form a heterodimer shortly after synthesis. Interacts with spike glycoprotein E2. The precursor of protein E3/E2 and E1 form a heterodimer shortly after synthesis. Processing of the precursor of protein E3/E2 into E2 and E3 results in a heterodimer of the spike glycoproteins E2 and E1. Spike at virion surface are constituted of a trimer of E2-E1 heterodimers. After target cell attachment and endocytosis, E1 change conformation to form homotrimers. Interacts with 6K protein. E1/E2 heterodimer interacts with host LDLR. In terms of assembly, interacts with spike glycoprotein E1. Processing of the precursor of protein E3/E2 into E2 and E3 results in a heterodimer of the spike glycoproteins E2 and E1. Spike at virion surface are constituted of a trimer of E2-E1 heterodimers. Interacts with 6K protein. Interacts with host MXRA8; this interaction mediates virus entry. As to quaternary structure, oligomer. Interacts with spike glycoprotein E1. Interacts with spike glycoprotein E2. Post-translationally, structural polyprotein: Specific enzymatic cleavages in vivo yield mature proteins. Capsid protein is auto-cleaved during polyprotein translation, unmasking a signal peptide at the N-terminus of the precursor of E3/E2. The remaining polyprotein is then targeted to the host endoplasmic reticulum, where host signal peptidase cleaves it into pE2, 6K and E1 proteins. pE2 is further processed to mature E3 and E2 by host furin in trans-Golgi vesicle. In terms of processing, palmitoylated via thioester bonds. These palmitoylations may induce disruption of the C-terminus transmembrane. This would result in the reorientation of E2 C-terminus from lumenal to cytoplasmic side. N-glycosylated. Post-translationally, palmitoylated via thioester bonds.

It localises to the virion. It is found in the host cytoplasm. The protein resides in the host cell membrane. Its subcellular location is the host nucleus. The protein localises to the virion membrane. It localises to the host Golgi apparatus. It is found in the host trans-Golgi network. The protein resides in the host endoplasmic reticulum. The catalysed reaction is Autocatalytic release of the core protein from the N-terminus of the togavirus structural polyprotein by hydrolysis of a -Trp-|-Ser- bond.. Its function is as follows. Forms an icosahedral capsid with a T=4 symmetry composed of 240 copies of the capsid protein surrounded by a lipid membrane through which penetrate 80 spikes composed of trimers of E1-E2 heterodimers. The capsid protein binds to the viral RNA genome at a site adjacent to a ribosome binding site for viral genome translation following genome release. Possesses a protease activity that results in its autocatalytic cleavage from the nascent structural protein. Following its self-cleavage, the capsid protein transiently associates with ribosomes, and within several minutes the protein binds to viral RNA and rapidly assembles into icosahedric core particles. The resulting nucleocapsid eventually associates with the cytoplasmic domain of the spike glycoprotein E2 at the cell membrane, leading to budding and formation of mature virions. In case of infection, new virions attach to target cells and after clathrin-mediated endocytosis their membrane fuses with the host endosomal membrane. This leads to the release of the nucleocapsid into the cytoplasm, followed by an uncoating event necessary for the genomic RNA to become accessible. The uncoating might be triggered by the interaction of capsid proteins with ribosomes. Binding of ribosomes would release the genomic RNA since the same region is genomic RNA-binding and ribosome-binding. Specifically inhibits interleukin-1 receptor-associated kinase 1/IRAK1-dependent signaling during viral entry, representing a means by which the alphaviruses may evade innate immune detection and activation prior to viral gene expression. In terms of biological role, provides the signal sequence for the translocation of the precursor of protein E3/E2 to the host endoplasmic reticulum. Furin-cleaved E3 remains associated with spike glycoprotein E1 and mediates pH protection of the latter during the transport via the secretory pathway. After virion release from the host cell, the assembly protein E3 is gradually released in the extracellular space. Functionally, plays a role in viral attachment to target host cell, by binding to the cell receptor MXRA8. The host LDLR may also act as a cell receptor for viral entry. Synthesized as a p62 precursor which is processed by furin at the cell membrane just before virion budding, giving rise to E2-E1 heterodimer. The p62-E1 heterodimer is stable, whereas E2-E1 is unstable and dissociate at low pH. p62 is processed at the last step, presumably to avoid E1 fusion activation before its final export to cell surface. E2 C-terminus contains a transitory transmembrane that would be disrupted by palmitoylation, resulting in reorientation of the C-terminal tail from lumenal to cytoplasmic side. This step is critical since E2 C-terminus is involved in budding by interacting with capsid proteins. This release of E2 C-terminus in cytoplasm occurs lately in protein export, and precludes premature assembly of particles at the endoplasmic reticulum membrane. Acts as a viroporin that participates in virus glycoprotein processing and transport to the plasma membrane, cell permeabilization and budding of viral particles. Disrupts the calcium homeostasis of the cell, probably at the endoplasmic reticulum level. This leads to cytoplasmic calcium elevation. Because of its lipophilic properties, the 6K protein is postulated to influence the selection of lipids that interact with the transmembrane domains of the glycoproteins, which, in turn, affects the deformability of the bilayer required for the extreme curvature that occurs as budding proceeds. Present in low amount in virions, about 3% compared to viral glycoproteins. Its function is as follows. Class II viral fusion protein. Fusion activity is inactive as long as E1 is bound to E2 in mature virion. After virus attachment to target cell via host MXRA8 and endocytosis, acidification of the endosome induce dissociation of E1/E2 heterodimer and concomitant trimerization of the E1 subunits. This E1 trimer is fusion active, and promotes release of viral nucleocapsid in cytoplasm after endosome and viral membrane fusion. Efficient fusion requires the presence of cholesterol and sphingolipid in the target membrane. The sequence is that of Structural polyprotein from Aedes vexans (Inland floodwater mosquito).